The sequence spans 495 residues: Cobyric acid synthase (495 aa).

The region spanning 256–444 (KVNVAVVLLR…VHGILDNPSV (189 aa)) is the GATase cobBQ-type domain. The Nucleophile role is filled by Cys-337. His-436 is a catalytic residue.

This sequence belongs to the CobB/CobQ family. CobQ subfamily.

It functions in the pathway cofactor biosynthesis; adenosylcobalamin biosynthesis. In terms of biological role, catalyzes amidations at positions B, D, E, and G on adenosylcobyrinic A,C-diamide. NH(2) groups are provided by glutamine, and one molecule of ATP is hydrogenolyzed for each amidation. The chain is Cobyric acid synthase from Bacteroides fragilis (strain ATCC 25285 / DSM 2151 / CCUG 4856 / JCM 11019 / LMG 10263 / NCTC 9343 / Onslow / VPI 2553 / EN-2).